The sequence spans 827 residues: Valine--tRNA ligase (827 aa).

The 'HIGH' region signature appears at 41 to 51 (PNVTGQLHLGH). The short motif at 511–515 (KMTKS) is the 'KMSKS' region element. Residue K514 participates in ATP binding. Positions 765-827 (ENLSKEKAQK…KELLDEKIIE (63 aa)) form a coiled coil.

This sequence belongs to the class-I aminoacyl-tRNA synthetase family. ValS type 1 subfamily. As to quaternary structure, monomer.

The protein localises to the cytoplasm. The catalysed reaction is tRNA(Val) + L-valine + ATP = L-valyl-tRNA(Val) + AMP + diphosphate. Catalyzes the attachment of valine to tRNA(Val). As ValRS can inadvertently accommodate and process structurally similar amino acids such as threonine, to avoid such errors, it has a 'posttransfer' editing activity that hydrolyzes mischarged Thr-tRNA(Val) in a tRNA-dependent manner. The sequence is that of Valine--tRNA ligase from Mycoplasmopsis pulmonis (strain UAB CTIP) (Mycoplasma pulmonis).